The sequence spans 276 residues: Diaminopimelate epimerase (276 aa).

Positions 13, 46, and 66 each coordinate substrate. Cys75 serves as the catalytic Proton donor. Residues 76-77 (GN), Asn159, Asn192, and 210-211 (ER) contribute to the substrate site. Cys219 (proton acceptor) is an active-site residue. Residue 220–221 (GS) participates in substrate binding.

Belongs to the diaminopimelate epimerase family. Homodimer.

The protein resides in the cytoplasm. The enzyme catalyses (2S,6S)-2,6-diaminopimelate = meso-2,6-diaminopimelate. It participates in amino-acid biosynthesis; L-lysine biosynthesis via DAP pathway; DL-2,6-diaminopimelate from LL-2,6-diaminopimelate: step 1/1. In terms of biological role, catalyzes the stereoinversion of LL-2,6-diaminopimelate (L,L-DAP) to meso-diaminopimelate (meso-DAP), a precursor of L-lysine and an essential component of the bacterial peptidoglycan. This Vibrio vulnificus (strain CMCP6) protein is Diaminopimelate epimerase.